The primary structure comprises 202 residues: Small ribosomal subunit protein uS4c (202 aa).

An S4 RNA-binding domain is found at 90–151; that stretch reads MRLDNTIFRL…KQKSRFIITK (62 aa).

It belongs to the universal ribosomal protein uS4 family. As to quaternary structure, part of the 30S ribosomal subunit. Contacts protein S5. The interaction surface between S4 and S5 is involved in control of translational fidelity.

The protein localises to the plastid. The protein resides in the chloroplast. One of the primary rRNA binding proteins, it binds directly to 16S rRNA where it nucleates assembly of the body of the 30S subunit. Functionally, with S5 and S12 plays an important role in translational accuracy. The sequence is that of Small ribosomal subunit protein uS4c (rps4) from Plagiochila adianthoides (Liverwort).